The chain runs to 1324 residues: DNA-directed RNA polymerase subunit beta' (1324 aa).

Residues C219, C292, C299, and C302 each coordinate Zn(2+). The interval A1293–F1324 is disordered. Positions D1302 to F1324 are enriched in acidic residues.

It belongs to the RNA polymerase beta' chain family. RpoC2 subfamily. In cyanobacteria the RNAP catalytic core is composed of 2 alpha, 1 beta, 1 beta', 1 gamma and 1 omega subunit. When a sigma factor is associated with the core the holoenzyme is formed, which can initiate transcription. Zn(2+) is required as a cofactor.

It catalyses the reaction RNA(n) + a ribonucleoside 5'-triphosphate = RNA(n+1) + diphosphate. Its function is as follows. DNA-dependent RNA polymerase catalyzes the transcription of DNA into RNA using the four ribonucleoside triphosphates as substrates. The sequence is that of DNA-directed RNA polymerase subunit beta' from Thermosynechococcus vestitus (strain NIES-2133 / IAM M-273 / BP-1).